We begin with the raw amino-acid sequence, 88 residues long: MKVAILILSILVLAVASETIEEYRDDFAVEELERATCAGQDKPCKETCDCCGERGECVCALSYEGKYRCICRQGNFLIAWHKLASCKK.

The first 17 residues, M1 to S17, serve as a signal peptide directing secretion. A propeptide spanning residues E18–R34 is cleaved from the precursor. 5 cysteine pairs are disulfide-bonded: C37/C51, C44/C57, C48/C86, C50/C71, and C59/C69. Residue K88 is a propeptide.

In terms of tissue distribution, expressed by the venom gland.

The protein resides in the secreted. In terms of biological role, inhibits voltage-gated sodium channels (Nav). Causes scratching, lacrimation, hypersalivation, sweating and agitation followed by spastic paralysis of the anterior and posterior extremities and death at dose levels of 1.62 mg/mouse. Insecticidal to the larval and adult forms of the house fly. The protein is U2-ctenitoxin-Pn1a of Phoneutria nigriventer (Brazilian armed spider).